We begin with the raw amino-acid sequence, 140 residues long: Putative esterase SSO2140 (140 aa).

It belongs to the thioesterase PaaI family.

The protein is Putative esterase SSO2140 of Saccharolobus solfataricus (strain ATCC 35092 / DSM 1617 / JCM 11322 / P2) (Sulfolobus solfataricus).